The chain runs to 269 residues: Small ribosomal subunit protein eS1 (269 aa).

Disordered regions lie at residues 1 to 20 (MAVG…SKKK) and 249 to 269 (AASG…QESV).

Belongs to the eukaryotic ribosomal protein eS1 family. Component of the small ribosomal subunit. Mature ribosomes consist of a small (40S) and a large (60S) subunit. The 40S subunit contains about 33 different proteins and 1 molecule of RNA (18S). The 60S subunit contains about 49 different proteins and 3 molecules of RNA (28S, 5.8S and 5S).

The protein resides in the cytoplasm. The protein is Small ribosomal subunit protein eS1 of Anopheles darlingi (Mosquito).